A 237-amino-acid polypeptide reads, in one-letter code: Large ribosomal subunit protein uL2 (237 aa).

A compositionally biased stretch (polar residues) spans 1–11 (MGKRIISQNRG). Disordered regions lie at residues 1–20 (MGKR…YRAP) and 201–237 (FGGG…GVRR).

This sequence belongs to the universal ribosomal protein uL2 family. As to quaternary structure, part of the 50S ribosomal subunit. Forms a bridge to the 30S subunit in the 70S ribosome.

Its function is as follows. One of the primary rRNA binding proteins. Required for association of the 30S and 50S subunits to form the 70S ribosome, for tRNA binding and peptide bond formation. It has been suggested to have peptidyltransferase activity; this is somewhat controversial. Makes several contacts with the 16S rRNA in the 70S ribosome. The sequence is that of Large ribosomal subunit protein uL2 from Archaeoglobus fulgidus (strain ATCC 49558 / DSM 4304 / JCM 9628 / NBRC 100126 / VC-16).